Reading from the N-terminus, the 495-residue chain is B3 domain-containing protein Os01g0234100 (495 aa).

Disordered stretches follow at residues 1–25 and 88–108; these read MAID…KMEQ and PGIP…NTTE. Residues 92 to 108 are compositionally biased toward polar residues; that stretch reads QTCNTQNTSNGRTNTTE. The segment at residues 152 to 243 is a DNA-binding region (TF-B3); it reads FVKHMLHSHV…KFKVHIIRDK (92 aa). The segment covering 268 to 282 has biased composition (basic and acidic residues); that stretch reads EATDNATKPKEDPET. The interval 268–289 is disordered; sequence EATDNATKPKEDPETTRVSSKV.

It localises to the nucleus. This Oryza sativa subsp. japonica (Rice) protein is B3 domain-containing protein Os01g0234100.